We begin with the raw amino-acid sequence, 80 residues long: Defensin-like protein 51 (80 aa).

The signal sequence occupies residues 1-27; sequence MGFTKILVTFFLVGLLVISSSPQNAIA. Cystine bridges form between Cys-39–Cys-79, Cys-43–Cys-66, Cys-52–Cys-77, and Cys-56–Cys-78.

This sequence belongs to the DEFL family.

The protein resides in the secreted. In Arabidopsis thaliana (Mouse-ear cress), this protein is Defensin-like protein 51 (LCR48).